We begin with the raw amino-acid sequence, 287 residues long: Telomere repeat-binding factor 5 (287 aa).

In terms of domain architecture, HTH myb-type spans 1 to 62 (MGNQKLKWTA…WRNLSVPPGT (62 aa)). Residues 28 to 58 (WKNILRDPEFADQLIHRSNIDLKDKWRNLSV) constitute a DNA-binding region (H-T-H motif). Positions 58–107 (VPPGTQSLTNKARPAKVKEEGDTPAADANDAVTIPRPIPTIPPPPGRRTL) are disordered. Pro residues predominate over residues 93–103 (RPIPTIPPPPG). The H15 domain occupies 119–193 (NAPRYDGVIF…SIQNFYKIPD (75 aa)). Residues 233 to 259 (AACKVVEAENKIDVAKLAAEEFEKMTK) adopt a coiled-coil conformation.

Belongs to the histone H1/H5 family. SMH subfamily.

It is found in the nucleus. Its subcellular location is the chromosome. In terms of biological role, binds preferentially double-stranded telomeric repeats. This chain is Telomere repeat-binding factor 5, found in Arabidopsis thaliana (Mouse-ear cress).